The sequence spans 352 residues: C-C chemokine receptor type 5 (352 aa).

Residues 1–30 (MDYQVSSPTYDIDYYTSEPCQKINVKQIAA) are Extracellular-facing. Y3 carries the post-translational modification Sulfotyrosine. O-linked (GalNAc...) serine glycosylation is found at S6 and S7. Residues Y10, Y14, and Y15 each carry the sulfotyrosine modification. Disulfide bonds link C20-C269 and C101-C178. A helical membrane pass occupies residues 31 to 58 (RLLPPLYSLVFIFGFVGNMLVILILINC). The Cytoplasmic portion of the chain corresponds to 59–68 (KRLKSMTDIY). Residues 69 to 89 (LLNLAISDLFFLLTVPFWAHY) form a helical membrane-spanning segment. At 90-102 (AAAQWDFGNTMCQ) the chain is on the extracellular side. Residues 103–124 (LLTGLYFIGFFSGIFFIILLTI) traverse the membrane as a helical segment. The Cytoplasmic portion of the chain corresponds to 125 to 141 (DRYLAIVHAVFALKART). Residues 142–166 (VTFGVVTSVITWVVAVFASLPGIIF) traverse the membrane as a helical segment. Over 167 to 198 (TRSQKEGLHYTCSSHFPYSQYQFWKNFQTLKI) the chain is Extracellular. A helical transmembrane segment spans residues 199–218 (VILGLVLPLLVMVICYSGIL). The Cytoplasmic portion of the chain corresponds to 219-235 (KTLLRCRNEKKRHRAVR). A helical transmembrane segment spans residues 236-260 (LIFTIMIVYFLFWAPYNIVLLLNTF). At 261–277 (QEFFGLNNCSSSNRLDQ) the chain is on the extracellular side. A helical membrane pass occupies residues 278–301 (AMQVTETLGMTHCCINPIIYAFVG). Residues 302 to 352 (EKFRNYLLVFFQKHIAKHFCKCCSIFQQEAPERASSVYTRSTGEQEISVGL) are Cytoplasmic-facing. 3 S-palmitoyl cysteine lipidation sites follow: C321, C323, and C324. A phosphoserine; by BARK1 mark is found at S336, S337, S342, and S349.

Belongs to the G-protein coupled receptor 1 family. In terms of assembly, interacts with PRAF2. Efficient ligand binding to CCL3/MIP-1alpha and CCL4/MIP-1beta requires sulfation, O-glycosylation and sialic acid modifications. Glycosylation on Ser-6 is required for efficient binding of CCL4. Interacts with GRK2. Interacts with ARRB1 and ARRB2. Interacts with CNIH4. Interacts with S100A4; this interaction stimulates T-lymphocyte chemotaxis. Post-translationally, sulfated on at least 2 of the N-terminal tyrosines. Sulfation is required for efficient binding of the chemokines, CCL3 and CCL4. In terms of processing, palmitoylation in the C-terminal is important for cell surface expression. Phosphorylation on serine residues in the C-terminal is stimulated by binding CC chemokines especially by APO-RANTES. Post-translationally, O-glycosylated, but not N-glycosylated. Ser-6 appears to be the major site even if Ser-7 may be also O-glycosylated. Also sialylated glycans present which contribute to chemokine binding. Thr-16 and Ser-17 may also be glycosylated and, if so, with small moieties such as a T-antigen.

It is found in the cell membrane. In terms of biological role, receptor for a number of inflammatory CC-chemokines including CCL3/MIP-1-alpha, CCL4/MIP-1-beta and RANTES and subsequently transduces a signal by increasing the intracellular calcium ion level. May play a role in the control of granulocytic lineage proliferation or differentiation. Participates in T-lymphocyte migration to the infection site by acting as a chemotactic receptor. The polypeptide is C-C chemokine receptor type 5 (CCR5) (Symphalangus syndactylus (Siamang)).